Consider the following 201-residue polypeptide: Large ribosomal subunit protein uL4 (201 aa).

Residues 45 to 71 (AQKTRAEVTGSGKKPWRQKGTGRARAG) are disordered.

Belongs to the universal ribosomal protein uL4 family. Part of the 50S ribosomal subunit.

In terms of biological role, one of the primary rRNA binding proteins, this protein initially binds near the 5'-end of the 23S rRNA. It is important during the early stages of 50S assembly. It makes multiple contacts with different domains of the 23S rRNA in the assembled 50S subunit and ribosome. Functionally, forms part of the polypeptide exit tunnel. This Shewanella halifaxensis (strain HAW-EB4) protein is Large ribosomal subunit protein uL4.